A 395-amino-acid chain; its full sequence is Homoserine O-acetyltransferase (395 aa).

An AB hydrolase-1 domain is found at 65–363 (PIVLIEHALT…SPTGHDGFLI (299 aa)). Ser-160 serves as the catalytic Nucleophile. Arg-230 is a substrate binding site. Catalysis depends on residues Asp-328 and His-358. Position 359 (Asp-359) interacts with substrate.

It belongs to the AB hydrolase superfamily. MetX family. Homodimer.

It localises to the cytoplasm. The enzyme catalyses L-homoserine + acetyl-CoA = O-acetyl-L-homoserine + CoA. It participates in amino-acid biosynthesis; L-methionine biosynthesis via de novo pathway; O-acetyl-L-homoserine from L-homoserine: step 1/1. Its function is as follows. Transfers an acetyl group from acetyl-CoA to L-homoserine, forming acetyl-L-homoserine. This is Homoserine O-acetyltransferase from Corynebacterium jeikeium (strain K411).